The sequence spans 340 residues: Phospho-N-acetylmuramoyl-pentapeptide-transferase (340 aa).

The next 10 helical transmembrane spans lie at 5-25 (FILSFFTSLLLMLIFGPHLIN), 50-70 (TPTMGGILIIFSIIISTIIWT), 73-93 (SNPYVWLTLTILIGYGIIGFI), 113-133 (FSLLSILACIIIFLIYYIIND), 147-167 (IIFNTKMICILISYFAIIGTS), 178-198 (GLAIVPIIFVTTNLSIISFIS), 218-238 (LTIICAAIIGSSLGFLWFNTY), 242-262 (IFMGDVGSLSLGGTIGIISVL), 267-287 (ILLIIVGGLFVIETLSVIIQV), and 318-338 (IIRFWIISFILMLLGLLMLKV).

This sequence belongs to the glycosyltransferase 4 family. MraY subfamily. Mg(2+) is required as a cofactor.

The protein localises to the cell membrane. The catalysed reaction is UDP-N-acetyl-alpha-D-muramoyl-L-alanyl-gamma-D-glutamyl-meso-2,6-diaminopimeloyl-D-alanyl-D-alanine + di-trans,octa-cis-undecaprenyl phosphate = di-trans,octa-cis-undecaprenyl diphospho-N-acetyl-alpha-D-muramoyl-L-alanyl-D-glutamyl-meso-2,6-diaminopimeloyl-D-alanyl-D-alanine + UMP. It functions in the pathway cell wall biogenesis; peptidoglycan biosynthesis. Catalyzes the initial step of the lipid cycle reactions in the biosynthesis of the cell wall peptidoglycan: transfers peptidoglycan precursor phospho-MurNAc-pentapeptide from UDP-MurNAc-pentapeptide onto the lipid carrier undecaprenyl phosphate, yielding undecaprenyl-pyrophosphoryl-MurNAc-pentapeptide, known as lipid I. The sequence is that of Phospho-N-acetylmuramoyl-pentapeptide-transferase from Buchnera aphidicola subsp. Baizongia pistaciae (strain Bp).